A 252-amino-acid polypeptide reads, in one-letter code: MAQPKITINNLNFYYGSNRALKDVNLEIQAHAVTALIGPSGCGKSTFLRTLNRLNDLIDGVRISGEILLDGQNIYAPEVDVVALRKRVGMVFQRPNPFPMSIYDNIAYGPRIHGITSRRELDGIVERSLKAAALWDEVAGRLRHSALGLSGGQQQRLCIARLLAVEPEVVLMDEPSSALDPISTLKIEELIHNLKEKYTIVIVTHNMQQAARVSDYTAFFLNGEMVEYDETEIIFTKPRDKRTEDYITGRFG.

Positions isoleucine 6–isoleucine 247 constitute an ABC transporter domain. Glycine 38–serine 45 is an ATP binding site.

The protein belongs to the ABC transporter superfamily. Phosphate importer (TC 3.A.1.7) family. The complex is composed of two ATP-binding proteins (PstB), two transmembrane proteins (PstC and PstA) and a solute-binding protein (PstS).

It localises to the cell membrane. It catalyses the reaction phosphate(out) + ATP + H2O = ADP + 2 phosphate(in) + H(+). Part of the ABC transporter complex PstSACB involved in phosphate import. Responsible for energy coupling to the transport system. In Moorella thermoacetica (strain ATCC 39073 / JCM 9320), this protein is Phosphate import ATP-binding protein PstB.